The sequence spans 137 residues: Large ribosomal subunit protein uL16 (137 aa).

Belongs to the universal ribosomal protein uL16 family. Part of the 50S ribosomal subunit.

Its function is as follows. Binds 23S rRNA and is also seen to make contacts with the A and possibly P site tRNAs. The protein is Large ribosomal subunit protein uL16 of Roseobacter denitrificans (strain ATCC 33942 / OCh 114) (Erythrobacter sp. (strain OCh 114)).